The primary structure comprises 2474 residues: Polyprotein P1234 (2474 aa).

Residues 28-259 form the Alphavirus-like MT domain; that stretch reads EPRQVTPNDH…ESRKLLKSWH (232 aa). The active-site For mRNA-capping enzyme nsP1 activity is the histidine 37. Zn(2+) contacts are provided by histidine 79, glutamate 129, cysteine 134, and cysteine 141. The tract at residues 295-450 is membrane-binding and oligomerization; sequence GLYGKTTGYA…QKVPAEFDSF (156 aa). Residues cysteine 417 and cysteine 419 are each lipidated (S-palmitoyl cysteine; by host). Positions 690 to 842 constitute a (+)RNA virus helicase ATP-binding domain; that stretch reads DLTNPPYHEF…HNICTQVYHK (153 aa). Position 721–728 (721–728) interacts with a ribonucleoside 5'-triphosphate; that stretch reads GVPGSGKS. In terms of domain architecture, (+)RNA virus helicase C-terminal spans 843–991; that stretch reads SISRRCTLPV…IKEWEVEHAS (149 aa). In terms of domain architecture, Peptidase C9 spans 1004–1327; it reads DTFQNKANVC…NQLNAAFVGQ (324 aa). Residues 1005-1024 form a nucleolus localization signal region; that stretch reads TFQNKANVCWAKSLVPILET. The active-site For cysteine protease nsP2 activity is cysteine 1013. The Nuclear export signal motif lies at 1058-1067; it reads TRMYGVDLDS. Residue histidine 1083 is the For cysteine protease nsP2 activity of the active site. The short motif at 1182-1186 is the Nuclear localization signal element; that stretch reads PTKRV. A Macro domain is found at 1334–1493; sequence APSYRVKRMD…KIAEAIQMRT (160 aa). The ADP-D-ribose site is built by aspartate 1343, asparagine 1357, glycine 1365, glycine 1445, valine 1446, and tyrosine 1447. Residues cysteine 1595, cysteine 1597, cysteine 1620, and cysteine 1638 each contribute to the Zn(2+) site. Residues 1651-1706 form a disordered region; the sequence is RVSPREYKSPQETAQEVSSTTSLTHSQFDLSVDGEELPAPSDLEADAPIPEPTPDD. An HVD region spans residues 1659–1857; the sequence is SPQETAQEVS…TCSDTDDELX (199 aa). A compositionally biased stretch (polar residues) spans 1660-1679; that stretch reads PQETAQEVSSTTSLTHSQFD. 2 interaction with host CD2AP regions span residues 1726-1739 and 1756-1767; these read VMNTAPVAPPRRRR and PMASVRFFRADL. Positions 1745-1793 are interaction with host FHL1; sequence VTCDEREGNVLPMASVRFFRADLHSIVQETAEIRDTAASLQAPLSVATE. The short motif at 1812–1815 is the FGDF; binding to host G3BP1 element; sequence FGDF. The interaction with host CD2AP stretch occupies residues 1820–1828; sequence IESLSSELL. The FGDF; binding to host G3BP1 signature appears at 1830–1833; that stretch reads FGDF. The 116-residue stretch at 2228–2343 folds into the RdRp catalytic domain; that stretch reads DAVLETDIAS…HGVVSDELMA (116 aa).

In terms of assembly, homododecamer. The enzyme forms a membrane-associated dodecameric ring with a central channel for the exchange of between the viral replication factories and the host cytoplasm. Interacts with non-structural protein 3. Interacts with RNA-directed RNA polymerase nsP4. Interacts with protease nsP2. Interacts with itself. Interacts with host STING1; this interaction results in inhibition of cGAS-STING signaling and increased levels of palmitoylation and protein stabilization of nsP1. Interacts with host TMEM45B; this interaction leads to viral replication inhibition. Interacts with mRNA-capping enzyme nsP1. Interacts (via C-terminus) with host G3BP1; this interaction inhibits the formation of host stress granules on viral mRNAs and the nsp3-G3BP1 complexes bind viral RNAs and probably orchestrate the assembly of viral replication complexes. Interacts (via C-terminus) with host G3BP2; this interaction inhibits the formation of host stress granules on viral mRNAs and the nsp3-G3BP2 complexes bind viral RNAs and probably orchestrate the assembly of viral replication complexes. Interacts (via C-terminus) with host NAP1L1. Interacts (via C-terminus) with host NAP1L4. Interacts (via C-terminus) with host DHX9; this interaction allows the recruitment of DHX9 to the plasma membrane, where it associates with viral replication complexes and may play a role in the translation-to-replication switch. Interacts (via C-terminus) with host FHL1 (via LIM domain 1); this interaction is required for viral RNA replication. Interacts (via C-terminus) with host CD2AP; this interaction plays a role in initiation of viral replication. Interacts (via C-terminus) with host SH3KBP1; this interaction plays a role in initiation of viral replication. As to quaternary structure, interacts with mRNA-capping enzyme nsP1. Interacts with protease nsP2. interacts with itself. Interacts with host TMEM45B; this interaction leads to viral replication inhibition. In terms of assembly, interacts with RNA-directed RNA polymerase nsP4. Interacts with mRNA-capping enzyme nsP1. Interacts with KPNA1/karyopherin-alpha1; this interaction probably allows the active transport of protease nsP2 into the host nucleus. Requires Mg(2+) as cofactor. It depends on Mn(2+) as a cofactor. In terms of processing, specific enzymatic cleavages in vivo yield mature proteins. The processing of the polyprotein is temporally regulated. In early stages (1.7 hpi), P1234 is first cleaved in trans through its nsP2 protease activity, releasing P123' and nsP4, which associate to form the early replication complex. At the same time, P1234 is also cut at the nsP1/nsP2 site early in infection but with lower efficiency. After replication of the viral minus-strand RNAs (4 hpi), the polyproteins are cut at the nsP1/nsP2 and nsP2/nsP3 sites very efficiently, preventing accumulation of P123' and P1234 and allowing the formation of the late replication complex. NsP3'/nsP4 site is not cleaved anymore and P34 is produced rather than nsP4. Specific enzymatic cleavages in vivo yield mature proteins. The processing of the polyprotein is temporally regulated. In early stages (1.7 hpi), P123 is cleaved at the nsP1/nsP2 site with low efficiency. After replication of the viral minus-strand RNAs (4 hpi), the polyproteins are cut at the nsP1/nsP2 and nsP2/nsP3 sites very efficiently, preventing accumulation of P123 and allowing the formation of the late replication complex. Post-translationally, specific enzymatic cleavages in vivo yield mature proteins. The processing of the polyprotein is temporally regulated. In early stages (1.7 hpi), P123' is cleaved at the nsP1/nsP2 site with low efficiency. After replication of the viral minus-strand RNAs (4 hpi), the polyproteins are cut at the nsP1/nsP2 and nsP2/nsP3 sites very efficiently, preventing accumulation of P123' and allowing the formation of the late replication complex. In terms of processing, palmitoylated by host palmitoyltransferases ZDHHC2 and ZDHHC19. Palmitoylation is increased by the interacton with host STING1. Phosphorylated by host on serines and threonines. Post-translationally, ubiquitinated; targets the protein for rapid degradation via the ubiquitin system. Nsp4 is present in extremely low quantities due to low frequency of translation through the amber stop-codon and the degradation by the ubiquitin pathway.

It is found in the host cytoplasmic vesicle membrane. The protein localises to the host cell membrane. Its subcellular location is the host cell projection. The protein resides in the host filopodium. It localises to the host nucleus. It is found in the host cytoplasm. It catalyses the reaction GTP + S-adenosyl-L-methionine = N(7)-methyl-GTP + S-adenosyl-L-homocysteine. The enzyme catalyses N(7)-methyl-GTP + L-histidyl-[protein] = N(tele)-(N(7)-methylguanosine 5'-phospho)-L-histidyl-[protein] + diphosphate. It carries out the reaction N(tele)-(N(7)-methylguanosine 5'-phospho)-L-histidyl-[protein] + a 5'-end diphospho-(purine-ribonucleoside) in mRNA + H(+) = a 5'-end (N(7)-methyl 5'-triphosphoguanosine)-(purine-ribonucleoside) in mRNA + L-histidyl-[protein]. The catalysed reaction is a 5'-end triphospho-ribonucleoside in mRNA + H2O = a 5'-end diphospho-ribonucleoside in mRNA + phosphate + H(+). It catalyses the reaction a ribonucleoside 5'-triphosphate + H2O = a ribonucleoside 5'-diphosphate + phosphate + H(+). The enzyme catalyses ATP + H2O = ADP + phosphate + H(+). It carries out the reaction RNA(n) + a ribonucleoside 5'-triphosphate = RNA(n+1) + diphosphate. The catalysed reaction is 4-O-(ADP-D-ribosyl)-L-aspartyl-[protein] + H2O = L-aspartyl-[protein] + ADP-D-ribose + H(+). It catalyses the reaction 5-O-(ADP-D-ribosyl)-L-glutamyl-[protein] + H2O = L-glutamyl-[protein] + ADP-D-ribose + H(+). The enzyme catalyses RNA(n) + ATP = RNA(n)-3'-adenine ribonucleotide + diphosphate. It carries out the reaction ADP-alpha-D-ribose 1''-phosphate + H2O = ADP-D-ribose + phosphate. Its function is as follows. Inactive precursor of the viral replicase, which is activated by cleavages carried out by the viral protease nsP2. Functionally, the early replication complex formed by the polyprotein P123 and nsP4 synthesizes minus-strand RNAs. As soon P123 is cleaved into mature proteins, the plus-strand RNAs synthesis begins. In terms of biological role, the early replication complex formed by the polyprotein P123' and nsP4 synthesizes minus-strand RNAs. Polyprotein P123' is a short-lived polyprotein that accumulates during early stage of infection. As soon P123' is cleaved into mature proteins, the plus-strand RNAs synthesis begins. Cytoplasmic capping enzyme that catalyzes two virus-specific reactions: methyltransferase and guanylyltransferase. mRNA-capping is necessary since all viral RNAs are synthesized in the cytoplasm, and host capping enzymes are restricted to the nucleus. The enzymatic reaction involves a covalent link between 7-methyl-GMP and nsP1, whereas eukaryotic capping enzymes form a covalent complex only with GMP. nsP1 capping consists in the following reactions: GTP is first methylated into 7-methyl-GMP and then is covalently linked to nsP1 to form the m7GMp-nsP1 complex from which 7-methyl-GMP complex is transferred to the mRNA to create the cap structure. NsP1 is also needed for the initiation of the minus-strand RNAs synthesis. At the initiation of virus replication, mediates the assembly of the viral replication complex made of the non-structural proteins, the association of this complex with the inner face of the plasma membrane and the formation of membranous spherules that serve as replication complex factories. Forms the neck of these spherules with a central channel for mediating communication and the passage of RNA, nucleotides, and small proteins between the viral replication complex and the host cytoplasm. Palmitoylated nsP1 is remodeling host cell cytoskeleton, and induces filopodium-like structure formation at the surface of the host cell. Its function is as follows. Multifunctional protein whose N-terminus is part of the RNA polymerase complex and displays NTPase, RNA triphosphatase and helicase activities. NTPase and RNA triphosphatase are involved in viral RNA capping and helicase keeps a check on the dsRNA replication intermediates. The C-terminus harbors a protease that specifically cleaves the polyproteins and releases the mature proteins. Required for the shutoff of minus-strand RNAs synthesis. Specifically inhibits the host IFN response by promoting the nuclear export of host STAT1. Also inhibits host transcription by inducing the rapid proteasome-dependent degradation of POLR2A, a catalytic subunit of the RNAPII complex. The resulting inhibition of cellular protein synthesis serves to ensure maximal viral gene expression and to evade host immune response. Functionally, seems to be essential for minus-strand RNAs and subgenomic 26S mRNAs synthesis. Displays mono-ADP-ribosylhydrolase activity. ADP-ribosylation is a post-translational modification that controls various processes of the host cell and the virus probably needs to revert it for optimal viral replication. Binds proteins of FXR family and sequesters them into the viral RNA replication complexes thereby inhibiting the formation of host stress granules on viral mRNAs. The nsp3'-FXR complexes bind viral RNAs and probably orchestrate the assembly of viral replication complexes, thanks to the ability of FXR family members to self-assemble and bind DNA. In terms of biological role, seems to be essential for minus-strand RNAs and subgenomic 26S mRNAs synthesis. Displays mono-ADP-ribosylhydrolase activity. ADP-ribosylation is a post-translational modification that controls various processes of the host cell and the virus probably needs to revert it for optimal viral replication. Binds proteins of G3BP family and sequesters them into the viral RNA replication complexes thereby inhibiting the formation of host stress granules on viral mRNAs. The nsp3-G3BP complexes bind viral RNAs and probably orchestrate the assembly of viral replication complexes, thanks to the ability of G3BP family members to self-assemble and bind DNA. RNA dependent RNA polymerase. Replicates genomic and antigenomic RNA by recognizing replications specific signals. The early replication complex formed by the polyprotein P123 and nsP4 synthesizes minus-strand RNAs. The late replication complex composed of fully processed nsP1-nsP4 is responsible for the production of genomic and subgenomic plus-strand RNAs. The chain is Polyprotein P1234 from Aedes aegypti (Yellowfever mosquito).